Here is a 49-residue protein sequence, read N- to C-terminus: Large ribosomal subunit protein bL33 (49 aa).

It belongs to the bacterial ribosomal protein bL33 family.

This Thermosipho melanesiensis (strain DSM 12029 / CIP 104789 / BI429) protein is Large ribosomal subunit protein bL33.